The primary structure comprises 56 residues: UPF0434 protein Sden_2197 (56 aa).

This sequence belongs to the UPF0434 family.

In Shewanella denitrificans (strain OS217 / ATCC BAA-1090 / DSM 15013), this protein is UPF0434 protein Sden_2197.